Consider the following 209-residue polypeptide: Large ribosomal subunit protein bL9 (209 aa).

The disordered stretch occupies residues glutamate 181–alanine 209. The segment covering glutamate 197–alanine 209 has biased composition (acidic residues).

Belongs to the bacterial ribosomal protein bL9 family.

Binds to the 23S rRNA. This is Large ribosomal subunit protein bL9 from Maricaulis maris (strain MCS10) (Caulobacter maris).